The primary structure comprises 603 residues: Elongation factor 4 (603 aa).

Residues Ser7 to Gln189 form the tr-type G domain. GTP-binding positions include Asp19–Thr24 and Asn136–Asp139.

It belongs to the TRAFAC class translation factor GTPase superfamily. Classic translation factor GTPase family. LepA subfamily.

It is found in the cell inner membrane. The enzyme catalyses GTP + H2O = GDP + phosphate + H(+). Functionally, required for accurate and efficient protein synthesis under certain stress conditions. May act as a fidelity factor of the translation reaction, by catalyzing a one-codon backward translocation of tRNAs on improperly translocated ribosomes. Back-translocation proceeds from a post-translocation (POST) complex to a pre-translocation (PRE) complex, thus giving elongation factor G a second chance to translocate the tRNAs correctly. Binds to ribosomes in a GTP-dependent manner. This Microcystis aeruginosa (strain NIES-843 / IAM M-2473) protein is Elongation factor 4.